Here is a 125-residue protein sequence, read N- to C-terminus: Fumarate reductase subunit D (125 aa).

3 helical membrane passes run Phe-30–Ile-50, Phe-63–His-83, and Ile-105–Ile-125.

It belongs to the FrdD family. As to quaternary structure, part of an enzyme complex containing four subunits: a flavoprotein (FrdA), an iron-sulfur protein (FrdB), and two hydrophobic anchor proteins (FrdC and FrdD).

The protein resides in the cell inner membrane. Anchors the catalytic components of the fumarate reductase complex to the cell membrane, binds quinones. This Vibrio campbellii (strain ATCC BAA-1116) protein is Fumarate reductase subunit D.